We begin with the raw amino-acid sequence, 275 residues long: Serine/threonine-protein phosphatase PGAM5, mitochondrial (275 aa).

The helical transmembrane segment at 7 to 24 threads the bilayer; the sequence is LIAGGSAAAAILGVVAAG.

It belongs to the phosphoglycerate mutase family. BPG-dependent PGAM subfamily. Phosphorylated by the RIPK1/RIPK3 complex under necrotic conditions. This phosphorylation increases PGAM5 phosphatase activity.

Its subcellular location is the mitochondrion outer membrane. The enzyme catalyses O-phospho-L-seryl-[protein] + H2O = L-seryl-[protein] + phosphate. The catalysed reaction is O-phospho-L-threonyl-[protein] + H2O = L-threonyl-[protein] + phosphate. Functionally, displays phosphatase activity for serine/threonine residues. Has apparently no phosphoglycerate mutase activity. May be regulator of mitochondrial dynamics. May be a central mediator for programmed necrosis. The sequence is that of Serine/threonine-protein phosphatase PGAM5, mitochondrial (pgam5) from Xenopus laevis (African clawed frog).